We begin with the raw amino-acid sequence, 124 residues long: Small ribosomal subunit protein uS12 (124 aa).

Asp-89 carries the 3-methylthioaspartic acid modification. Residues 105-124 form a disordered region; the sequence is TGVDSRMQGRSKYGTKKPKK.

This sequence belongs to the universal ribosomal protein uS12 family. In terms of assembly, part of the 30S ribosomal subunit. Contacts proteins S8 and S17. May interact with IF1 in the 30S initiation complex.

Its function is as follows. With S4 and S5 plays an important role in translational accuracy. In terms of biological role, interacts with and stabilizes bases of the 16S rRNA that are involved in tRNA selection in the A site and with the mRNA backbone. Located at the interface of the 30S and 50S subunits, it traverses the body of the 30S subunit contacting proteins on the other side and probably holding the rRNA structure together. The combined cluster of proteins S8, S12 and S17 appears to hold together the shoulder and platform of the 30S subunit. The sequence is that of Small ribosomal subunit protein uS12 from Vesicomyosocius okutanii subsp. Calyptogena okutanii (strain HA).